Consider the following 287-residue polypeptide: 2-dehydro-3-deoxyphosphooctonate aldolase (287 aa).

The protein belongs to the KdsA family.

The protein localises to the cytoplasm. It carries out the reaction D-arabinose 5-phosphate + phosphoenolpyruvate + H2O = 3-deoxy-alpha-D-manno-2-octulosonate-8-phosphate + phosphate. The protein operates within carbohydrate biosynthesis; 3-deoxy-D-manno-octulosonate biosynthesis; 3-deoxy-D-manno-octulosonate from D-ribulose 5-phosphate: step 2/3. Its pathway is bacterial outer membrane biogenesis; lipopolysaccharide biosynthesis. In Rhodopseudomonas palustris (strain TIE-1), this protein is 2-dehydro-3-deoxyphosphooctonate aldolase.